The following is a 103-amino-acid chain: NADH-ubiquinone oxidoreductase chain 4L (103 aa).

Helical transmembrane passes span 6–26 (IFFL…GIFI), 31–51 (IIII…NFAI), and 65–85 (ILYT…ILII).

This sequence belongs to the complex I subunit 4L family.

It localises to the mitochondrion membrane. The enzyme catalyses a ubiquinone + NADH + 5 H(+)(in) = a ubiquinol + NAD(+) + 4 H(+)(out). Functionally, core subunit of the mitochondrial membrane respiratory chain NADH dehydrogenase (Complex I) that is believed to belong to the minimal assembly required for catalysis. Complex I functions in the transfer of electrons from NADH to the respiratory chain. The immediate electron acceptor for the enzyme is believed to be ubiquinone. This chain is NADH-ubiquinone oxidoreductase chain 4L (ND4L), found in Acanthamoeba castellanii (Amoeba).